A 156-amino-acid polypeptide reads, in one-letter code: MDITFTIFAQSIAFAALIWIVATKIWPPLIKVIEERQQKIAEGLAAADLGQKELAQAQEEIKKTLKNAREKANEIIEQAHARAHQIIEAAKAEAITETNRQQNLAQVEIEAAAKRAREELRKHVSILAVNGAEKLLKREIDVNTHKMLLDELAAEI.

Residues 3 to 23 (ITFTIFAQSIAFAALIWIVAT) traverse the membrane as a helical segment.

Belongs to the ATPase B chain family. As to quaternary structure, F-type ATPases have 2 components, F(1) - the catalytic core - and F(0) - the membrane proton channel. F(1) has five subunits: alpha(3), beta(3), gamma(1), delta(1), epsilon(1). F(0) has three main subunits: a(1), b(2) and c(10-14). The alpha and beta chains form an alternating ring which encloses part of the gamma chain. F(1) is attached to F(0) by a central stalk formed by the gamma and epsilon chains, while a peripheral stalk is formed by the delta and b chains.

It is found in the cell inner membrane. Functionally, f(1)F(0) ATP synthase produces ATP from ADP in the presence of a proton or sodium gradient. F-type ATPases consist of two structural domains, F(1) containing the extramembraneous catalytic core and F(0) containing the membrane proton channel, linked together by a central stalk and a peripheral stalk. During catalysis, ATP synthesis in the catalytic domain of F(1) is coupled via a rotary mechanism of the central stalk subunits to proton translocation. Its function is as follows. Component of the F(0) channel, it forms part of the peripheral stalk, linking F(1) to F(0). The polypeptide is ATP synthase subunit b (Xylella fastidiosa (strain M12)).